The primary structure comprises 224 residues: uncharacterized protein (224 aa).

A compositionally biased stretch (pro residues) spans Thr-44 to Leu-139. The interval Thr-44–Tyr-145 is disordered.

This is an uncharacterized protein from Lepidoptera (butterflies and moths).